We begin with the raw amino-acid sequence, 94 residues long: Protein RnfH (94 aa).

Belongs to the UPF0125 (RnfH) family.

This Yersinia pestis bv. Antiqua (strain Antiqua) protein is Protein RnfH.